A 98-amino-acid chain; its full sequence is Small ribosomal subunit protein bS20 (98 aa).

The segment covering 1–15 (MAPKKTTKKGGPKKR) has biased composition (basic residues). The segment at 1 to 21 (MAPKKTTKKGGPKKRPSAEKR) is disordered.

Belongs to the bacterial ribosomal protein bS20 family.

Functionally, binds directly to 16S ribosomal RNA. The polypeptide is Small ribosomal subunit protein bS20 (Chlamydia abortus (strain DSM 27085 / S26/3) (Chlamydophila abortus)).